We begin with the raw amino-acid sequence, 96 residues long: MRHYEIMVILDSSLEERTVAPSLDTYLNVIRTAGGSVEKTDVWGRRRLAYEIDKKTEGIYAVIDLQATPAAVAELERQLRLNESVLRTKVIRPEVR.

The protein belongs to the bacterial ribosomal protein bS6 family.

Functionally, binds together with bS18 to 16S ribosomal RNA. The sequence is that of Small ribosomal subunit protein bS6 from Salinispora arenicola (strain CNS-205).